The primary structure comprises 392 residues: Probable glycerol-3-phosphate dehydrogenase 2 (392 aa).

NAD(+) is bound by residues 42–47, Phe-130, Lys-153, and Ala-196; that span reads GSGNWG. Lys-153 is a substrate binding site. The Proton acceptor role is filled by Lys-248. NAD(+) contacts are provided by Arg-312 and Gln-341. 312–313 is a binding site for substrate; the sequence is RN.

It belongs to the NAD-dependent glycerol-3-phosphate dehydrogenase family. As to quaternary structure, homodimer.

It is found in the cytoplasm. It carries out the reaction sn-glycerol 3-phosphate + NAD(+) = dihydroxyacetone phosphate + NADH + H(+). The chain is Probable glycerol-3-phosphate dehydrogenase 2 (gpdh-2) from Caenorhabditis elegans.